Consider the following 805-residue polypeptide: Sucrose synthase (805 aa).

The interval Met275 to Thr752 is GT-B glycosyltransferase.

The protein belongs to the glycosyltransferase 1 family. Plant sucrose synthase subfamily.

The enzyme catalyses an NDP-alpha-D-glucose + D-fructose = a ribonucleoside 5'-diphosphate + sucrose + H(+). Sucrose-cleaving enzyme that provides UDP-glucose and fructose for various metabolic pathways. The protein is Sucrose synthase of Medicago sativa (Alfalfa).